A 526-amino-acid chain; its full sequence is Glucose-6-phosphate 1-dehydrogenase (526 aa).

NADP(+)-binding positions include 50–57 (GASGDLAK), R84, and K184. Residues K184, 214–218 (HYLGK), E252, and D271 contribute to the D-glucose 6-phosphate site. The active-site Proton acceptor is the H276. R370 contacts NADP(+). Residues K373 and R378 each coordinate D-glucose 6-phosphate. Residues K379, R383, and R406 each coordinate NADP(+). Q408 lines the D-glucose 6-phosphate pocket. NADP(+) contacts are provided by residues 414–416 (YFK), 434–436 (DLT), R500, Y516, and W522.

Belongs to the glucose-6-phosphate dehydrogenase family.

Its subcellular location is the cytoplasm. It is found in the cytosol. It carries out the reaction D-glucose 6-phosphate + NADP(+) = 6-phospho-D-glucono-1,5-lactone + NADPH + H(+). It functions in the pathway carbohydrate degradation; pentose phosphate pathway; D-ribulose 5-phosphate from D-glucose 6-phosphate (oxidative stage): step 1/3. In terms of biological role, cytosolic glucose-6-phosphate dehydrogenase that catalyzes the first and rate-limiting step of the oxidative branch within the pentose phosphate pathway/shunt, an alternative route to glycolysis for the dissimilation of carbohydrates and a major source of reducing power and metabolic intermediates for fatty acid and nucleic acid biosynthetic processes. This is Glucose-6-phosphate 1-dehydrogenase (ZW) from Ceratitis capitata (Mediterranean fruit fly).